Here is a 572-residue protein sequence, read N- to C-terminus: Proline--tRNA ligase (572 aa).

It belongs to the class-II aminoacyl-tRNA synthetase family. ProS type 1 subfamily. In terms of assembly, homodimer.

It is found in the cytoplasm. The catalysed reaction is tRNA(Pro) + L-proline + ATP = L-prolyl-tRNA(Pro) + AMP + diphosphate. Catalyzes the attachment of proline to tRNA(Pro) in a two-step reaction: proline is first activated by ATP to form Pro-AMP and then transferred to the acceptor end of tRNA(Pro). As ProRS can inadvertently accommodate and process non-cognate amino acids such as alanine and cysteine, to avoid such errors it has two additional distinct editing activities against alanine. One activity is designated as 'pretransfer' editing and involves the tRNA(Pro)-independent hydrolysis of activated Ala-AMP. The other activity is designated 'posttransfer' editing and involves deacylation of mischarged Ala-tRNA(Pro). The misacylated Cys-tRNA(Pro) is not edited by ProRS. The sequence is that of Proline--tRNA ligase from Pectobacterium carotovorum subsp. carotovorum (strain PC1).